Consider the following 66-residue polypeptide: Large ribosomal subunit protein bL33c (66 aa).

It belongs to the bacterial ribosomal protein bL33 family.

It localises to the plastid. The protein localises to the chloroplast. This is Large ribosomal subunit protein bL33c from Chloranthus spicatus (Chulantree).